The sequence spans 190 residues: Dynactin subunit 6 (190 aa).

T186 carries the post-translational modification Phosphothreonine; by CDK1.

Belongs to the dynactin subunits 5/6 family. Dynactin subunit 6 subfamily. Subunit of dynactin, a multiprotein complex part of a tripartite complex with dynein and a adapter, such as BICDL1, BICD2 or HOOK3. The dynactin complex is built around ACTR1A/ACTB filament and consists of an actin-related filament composed of a shoulder domain, a pointed end and a barbed end. Its length is defined by its flexible shoulder domain. The soulder is composed of 2 DCTN1 subunits, 4 DCTN2 and 2 DCTN3. The 4 DCNT2 (via N-terminus) bind the ACTR1A filament and act as molecular rulers to determine the length. The pointed end is important for binding dynein-dynactin cargo adapters. Consists of 4 subunits: ACTR10, DCNT4, DCTN5 and DCTN6. Within the complex DCTN6 forms a heterodimer with DCTN5. The barbed end is composed of a CAPZA1:CAPZB heterodimers, which binds ACTR1A/ACTB filament and dynactin and stabilizes dynactin. Interacts with PLK1. Interacts with N4BP2L1. In terms of processing, phosphorylation at Thr-186 by CDK1 during mitotic prometaphase creates a binding site for PLK1 that facilitates its recruitment to kinetochores.

The protein localises to the cytoplasm. Its subcellular location is the cytoskeleton. It localises to the chromosome. It is found in the centromere. The protein resides in the kinetochore. Functionally, part of the dynactin complex that activates the molecular motor dynein for ultra-processive transport along microtubules. The chain is Dynactin subunit 6 (DCTN6) from Pongo abelii (Sumatran orangutan).